Consider the following 511-residue polypeptide: Cytochrome P450 26B1 (511 aa).

A heme-binding site is contributed by cysteine 440.

Belongs to the cytochrome P450 family. Heme serves as cofactor.

It localises to the endoplasmic reticulum membrane. The protein localises to the microsome membrane. The enzyme catalyses all-trans-retinoate + reduced [NADPH--hemoprotein reductase] + O2 = all-trans-4-hydroxyretinoate + oxidized [NADPH--hemoprotein reductase] + H2O + H(+). It catalyses the reaction all-trans-retinoate + reduced [NADPH--hemoprotein reductase] + O2 = all-trans-18-hydroxyretinoate + oxidized [NADPH--hemoprotein reductase] + H2O + H(+). In terms of biological role, a cytochrome P450 monooxygenase involved in the metabolism of retinoates (RAs), the active metabolites of vitamin A, and critical signaling molecules in animals. RAs exist as at least four different isomers: all-trans-RA (atRA), 9-cis-RA, 13-cis-RA, and 9,13-dicis-RA, where atRA is considered to be the biologically active isomer, although 9-cis-RA and 13-cis-RA also have activity. Catalyzes the hydroxylation of atRA primarily at C-4 and C-18, thereby contributing to the regulation of atRA homeostasis and signaling. Hydroxylation of atRA limits its biological activity and initiates a degradative process leading to its eventual elimination. Involved in the convertion of atRA to all-trans-4-oxo-RA. Can oxidize all-trans-13,14-dihydroretinoate (DRA) to metabolites which could include all-trans-4-oxo-DRA, all-trans-4-hydroxy-DRA, all-trans-5,8-epoxy-DRA, and all-trans-18-hydroxy-DRA. Plays a role in skeletal development, both at the level of patterning and in the ossification of bone and the establishment of some synovial joints. The protein is Cytochrome P450 26B1 of Danio rerio (Zebrafish).